A 116-amino-acid polypeptide reads, in one-letter code: Large ribosomal subunit protein bL20 (116 aa).

It belongs to the bacterial ribosomal protein bL20 family.

Its function is as follows. Binds directly to 23S ribosomal RNA and is necessary for the in vitro assembly process of the 50S ribosomal subunit. It is not involved in the protein synthesizing functions of that subunit. The chain is Large ribosomal subunit protein bL20 from Nautilia profundicola (strain ATCC BAA-1463 / DSM 18972 / AmH).